Consider the following 484-residue polypeptide: Dynein regulatory complex subunit 2 (484 aa).

Coiled coils occupy residues 92–160 (VDCK…RKTI) and 374–403 (KEQE…GMEN).

This sequence belongs to the DRC2 family. As to quaternary structure, component of the nexin-dynein regulatory complex (N-DRC). Interacts with DRC1.

Its subcellular location is the cytoplasm. The protein resides in the cytoskeleton. It localises to the flagellum basal body. It is found in the cell projection. The protein localises to the cilium. Its subcellular location is the flagellum. The protein resides in the flagellum axoneme. Its function is as follows. Component of the nexin-dynein regulatory complex (N-DRC), a key regulator of ciliary/flagellar motility which maintains the alignment and integrity of the distal axoneme and regulates microtubule sliding in motile axonemes. Plays a critical role in the assembly of N-DRC and also stabilizes the assembly of multiple inner dynein arms and radial spokes. Coassembles with DRC1 to form a central scaffold needed for assembly of the N-DRC and its attachment to the outer doublet microtubules. The sequence is that of Dynein regulatory complex subunit 2 (CCDC65) from Macaca fascicularis (Crab-eating macaque).